A 413-amino-acid chain; its full sequence is Probable tRNA pseudouridine synthase D (413 aa).

Residue aspartate 97 is the Nucleophile of the active site. One can recognise a TRUD domain in the interval 167–370; that stretch reads AAPNYYGYQR…YGTYRRVRLE (204 aa).

The protein belongs to the pseudouridine synthase TruD family.

It carries out the reaction uridine(13) in tRNA = pseudouridine(13) in tRNA. Could be responsible for synthesis of pseudouridine from uracil-13 in transfer RNAs. The chain is Probable tRNA pseudouridine synthase D from Pyrobaculum aerophilum (strain ATCC 51768 / DSM 7523 / JCM 9630 / CIP 104966 / NBRC 100827 / IM2).